The primary structure comprises 317 residues: Transaldolase (317 aa).

The active-site Schiff-base intermediate with substrate is the K126.

Belongs to the transaldolase family. Type 1 subfamily. As to quaternary structure, homodimer.

The protein localises to the cytoplasm. The enzyme catalyses D-sedoheptulose 7-phosphate + D-glyceraldehyde 3-phosphate = D-erythrose 4-phosphate + beta-D-fructose 6-phosphate. Its pathway is carbohydrate degradation; pentose phosphate pathway; D-glyceraldehyde 3-phosphate and beta-D-fructose 6-phosphate from D-ribose 5-phosphate and D-xylulose 5-phosphate (non-oxidative stage): step 2/3. Functionally, transaldolase is important for the balance of metabolites in the pentose-phosphate pathway. The polypeptide is Transaldolase (Burkholderia thailandensis (strain ATCC 700388 / DSM 13276 / CCUG 48851 / CIP 106301 / E264)).